The chain runs to 446 residues: Phosphoglucosamine mutase (446 aa).

The active-site Phosphoserine intermediate is the Ser104. Ser104, Asp241, Asp243, and Asp245 together coordinate Mg(2+). At Ser104 the chain carries Phosphoserine.

Belongs to the phosphohexose mutase family. Requires Mg(2+) as cofactor. Activated by phosphorylation.

The enzyme catalyses alpha-D-glucosamine 1-phosphate = D-glucosamine 6-phosphate. Functionally, catalyzes the conversion of glucosamine-6-phosphate to glucosamine-1-phosphate. The polypeptide is Phosphoglucosamine mutase (Teredinibacter turnerae (strain ATCC 39867 / T7901)).